Here is a 515-residue protein sequence, read N- to C-terminus: FAD-dependent oxidoreductase domain-containing protein 1 homolog (515 aa).

Positions 18-37 (AGATSNGSGSSGGDKSGEDL) are disordered. Residues 100-116 (VLIIGGGGVGSSIAYWL) traverse the membrane as a helical segment.

In terms of assembly, associates with mitochondrial complex I assembly intermediates during its biogenesis. Requires FAD as cofactor.

It localises to the mitochondrion inner membrane. In terms of biological role, involved in the assembly of the mitochondrial membrane respiratory chain NADH dehydrogenase (Complex I). The sequence is that of FAD-dependent oxidoreductase domain-containing protein 1 homolog from Drosophila melanogaster (Fruit fly).